The sequence spans 801 residues: U-box domain-containing protein 34 (801 aa).

The tract at residues 205–309 is disordered; it reads RSPTLPDPRQ…PETSRKSKKV (105 aa). Positions 236-254 are enriched in polar residues; it reads LTCNKPKTPQSSKASSATT. Residues 289–309 show a composition bias toward basic and acidic residues; that stretch reads VSEHRDSDRSPPETSRKSKKV. Residues 301-395 adopt a coiled-coil conformation; sequence ETSRKSKKVE…ETAKALLARE (95 aa). In terms of domain architecture, Protein kinase spans 442–705; the sequence is FSPEKVIGEG…DLKSEVIPVL (264 aa). ATP is bound by residues 448–456 and Lys-469; that span reads IGEGGYGKV. Asp-564 acts as the Proton acceptor in catalysis. The region spanning 724–797 is the U-box domain; that stretch reads RAPSHYFCPI…RDWKSRVRFS (74 aa).

Belongs to the protein kinase superfamily. Ser/Thr protein kinase family.

The enzyme catalyses L-seryl-[protein] + ATP = O-phospho-L-seryl-[protein] + ADP + H(+). The catalysed reaction is L-threonyl-[protein] + ATP = O-phospho-L-threonyl-[protein] + ADP + H(+). It carries out the reaction S-ubiquitinyl-[E2 ubiquitin-conjugating enzyme]-L-cysteine + [acceptor protein]-L-lysine = [E2 ubiquitin-conjugating enzyme]-L-cysteine + N(6)-ubiquitinyl-[acceptor protein]-L-lysine.. Its pathway is protein modification; protein ubiquitination. In terms of biological role, functions as an E3 ubiquitin ligase. The protein is U-box domain-containing protein 34 (PUB34) of Arabidopsis thaliana (Mouse-ear cress).